The primary structure comprises 459 residues: Alcohol acyl transferase 2 (459 aa).

Residues His-164 and Asn-385 each act as proton acceptor in the active site.

Belongs to the plant acyltransferase family. In terms of tissue distribution, highly expressed in the cortex and skin of ripe fruit.

Involved in the biosynthesis of volatile esters which confer ripe apple fruit flavor. Alcohol acyl transferase that can use a wide range of alcohols as substrate to produce esters. The sequence is that of Alcohol acyl transferase 2 from Malus domestica (Apple).